The primary structure comprises 152 residues: Large ribosomal subunit protein uL30 (152 aa).

Belongs to the universal ribosomal protein uL30 family. Part of the 50S ribosomal subunit.

This chain is Large ribosomal subunit protein uL30, found in Archaeoglobus fulgidus (strain ATCC 49558 / DSM 4304 / JCM 9628 / NBRC 100126 / VC-16).